We begin with the raw amino-acid sequence, 208 residues long: Transcription factor atf-4 homolog (208 aa).

Disordered regions lie at residues 18 to 47 (HNQTHSTPQYHNHHHHHHQSPTYPQSYFNP) and 106 to 165 (ERRS…EKEE). Low complexity predominate over residues 110–120 (NSSASPASNWS). Positions 121-141 (SDEHDSQSEKSYHPYKTPEKK) are enriched in basic and acidic residues. The bZIP domain occupies 138 to 201 (PEKKERKKAQ…RYFKKFMTEM (64 aa)). The interval 140 to 163 (KKERKKAQNRLAATRYREKKRREK) is basic motif. Positions 173 to 187 (LSVTNGKLKDQVSEL) are leucine-zipper.

Belongs to the bZIP family.

It localises to the nucleus. In terms of biological role, transcription factor. Involved in positively modulating longevity and stress tolerance, probably acting by positively regulating expression of transsulfuration enzyme cth-2, leading to increased hydrogen sulfide production and therefore increased protein persulfidation, a protective modification of redox-reactive cysteines. May mediate longevity and increased stress resistance induced by mTORC1 suppression. The polypeptide is Transcription factor atf-4 homolog (Caenorhabditis elegans).